The sequence spans 421 residues: AA11 family lytic polysaccharide monooxygenase (421 aa).

A signal peptide spans 1 to 19 (MFSKAFLSAALLGAAAVEG). Cu(+) contacts are provided by H20, H79, and E93. Intrachain disulfides connect C48/C162, C84/C110, and C201/C235. An N-linked (GlcNAc...) asparagine glycan is attached at N117. The segment at 231-349 (GSQACTGTPT…SSSSSSSGAL (119 aa)) is disordered. Positions 247-285 (TAGSSGSSGSSSGSSSGGSSSSAAGSGATAPPAPAVSST) are enriched in low complexity. Residues 304-314 (SPAQPTHTSAP) show a composition bias toward polar residues. Residues 315-349 (SGGSSSGSGSSSGSNSGSSSGSSSSSSSSSSSGAL) are compositionally biased toward low complexity.

The protein belongs to the polysaccharide monooxygenase AA11 family. It depends on Cu(2+) as a cofactor.

Functionally, lytic polysaccharide monooxygenase (LPMO) that depolymerizes chitin via the oxidation of scissile beta-(1-4)-glycosidic bonds, yielding C1 or C4 oxidation products. Catalysis by LPMOs requires the reduction of the active-site copper from Cu(II) to Cu(I) by a reducing agent and H(2)O(2) or O(2) as a cosubstrate. Active on chitin but has no activity on other substrates, including diverse mannans, cellulose and starch (data not shown). Primary chain cleavage yields predominantly aldonic acid oligosaccharides with even-numbered degrees of polymerization. The protein is AA11 family lytic polysaccharide monooxygenase of Aspergillus oryzae (strain ATCC 42149 / RIB 40) (Yellow koji mold).